The sequence spans 567 residues: Structural protein ORF567 (567 aa).

Positions isoleucine 7 to glutamine 393 are disordered. Residues threonine 65–isoleucine 79 are compositionally biased toward pro residues. A compositionally biased stretch (basic and acidic residues) spans proline 180–arginine 200. The span at threonine 219–threonine 231 shows a compositional bias: low complexity. Pro residues-rich tracts occupy residues methionine 253–proline 278 and threonine 285–threonine 299. A compositionally biased stretch (low complexity) spans histidine 300 to asparagine 312. Residues proline 319 to histidine 335 show a composition bias toward pro residues. Residues proline 343 to glycine 353 are compositionally biased toward basic and acidic residues. Low complexity predominate over residues serine 354–asparagine 372.

It is found in the virion. This chain is Structural protein ORF567, found in Acidianus two-tailed virus (ATV).